The chain runs to 115 residues: U3-lycotoxin-Ls1u (115 aa).

The N-terminal stretch at Met1–Ala20 is a signal peptide. Residues Glu21 to Arg44 constitute a propeptide that is removed on maturation. Cystine bridges form between Cys48-Cys63, Cys55-Cys72, and Cys62-Cys87.

This sequence belongs to the neurotoxin 19 (CSTX) family. 01 subfamily. Expressed by the venom gland.

It is found in the secreted. The sequence is that of U3-lycotoxin-Ls1u from Lycosa singoriensis (Wolf spider).